Here is a 663-residue protein sequence, read N- to C-terminus: Methionine--tRNA ligase (663 aa).

Residues 10 to 20 carry the 'HIGH' region motif; that stretch reads AYTNGPLHLGH. Zn(2+) contacts are provided by Cys142, Cys145, Cys154, and Cys157. The 'KMSKS' region signature appears at 323–327; sequence KMSTS. Thr326 lines the ATP pocket. The tRNA-binding domain occupies 563 to 663; that stretch reads YFGNVDLRVG…RDLPVGSKIH (101 aa).

The protein belongs to the class-I aminoacyl-tRNA synthetase family. MetG type 1 subfamily. As to quaternary structure, homodimer. It depends on Zn(2+) as a cofactor.

It localises to the cytoplasm. The catalysed reaction is tRNA(Met) + L-methionine + ATP = L-methionyl-tRNA(Met) + AMP + diphosphate. Functionally, is required not only for elongation of protein synthesis but also for the initiation of all mRNA translation through initiator tRNA(fMet) aminoacylation. This chain is Methionine--tRNA ligase, found in Methanococcus maripaludis (strain C7 / ATCC BAA-1331).